Here is a 185-residue protein sequence, read N- to C-terminus: Ribosome-recycling factor (185 aa).

Residues 138–157 (ELKKLEKDHTASEDEVKRAQ) are disordered.

Belongs to the RRF family.

It localises to the cytoplasm. Functionally, responsible for the release of ribosomes from messenger RNA at the termination of protein biosynthesis. May increase the efficiency of translation by recycling ribosomes from one round of translation to another. This is Ribosome-recycling factor from Desulfitobacterium hafniense (strain DSM 10664 / DCB-2).